We begin with the raw amino-acid sequence, 329 residues long: GMP reductase (329 aa).

Residue Cys-178 is the Thioimidate intermediate of the active site. NADP(+) is bound at residue 207–230 (VIADGGIRTHGDIAKSIRMGATMV).

The protein belongs to the IMPDH/GMPR family. GuaC type 2 subfamily.

The enzyme catalyses IMP + NH4(+) + NADP(+) = GMP + NADPH + 2 H(+). Catalyzes the irreversible NADPH-dependent deamination of GMP to IMP. It functions in the conversion of nucleobase, nucleoside and nucleotide derivatives of G to A nucleotides, and in maintaining the intracellular balance of A and G nucleotides. The protein is GMP reductase of Lactococcus lactis subsp. lactis (strain IL1403) (Streptococcus lactis).